Reading from the N-terminus, the 55-residue chain is Large ribosomal subunit protein bL33 (55 aa).

Belongs to the bacterial ribosomal protein bL33 family.

The protein is Large ribosomal subunit protein bL33 of Dinoroseobacter shibae (strain DSM 16493 / NCIMB 14021 / DFL 12).